Reading from the N-terminus, the 87-residue chain is Cell division topological specificity factor (87 aa).

Belongs to the MinE family.

Functionally, prevents the cell division inhibition by proteins MinC and MinD at internal division sites while permitting inhibition at polar sites. This ensures cell division at the proper site by restricting the formation of a division septum at the midpoint of the long axis of the cell. The sequence is that of Cell division topological specificity factor from Roseiflexus castenholzii (strain DSM 13941 / HLO8).